The following is a 237-amino-acid chain: Small ribosomal subunit protein uS5 (237 aa).

Positions 1–59 (MADETNLEGVAAVEATGGEPQREGRGRGRGRGGNDRGGERGGRGRRDDRRGRGNNDEEG) are disordered. Residues 20-55 (PQREGRGRGRGRGGNDRGGERGGRGRRDDRRGRGNN) are compositionally biased toward basic and acidic residues. The region spanning 63 to 126 (LIEKLVHINR…AAAKRAMVRV (64 aa)) is the S5 DRBM domain.

Belongs to the universal ribosomal protein uS5 family. As to quaternary structure, part of the 30S ribosomal subunit. Contacts proteins S4 and S8.

Its function is as follows. With S4 and S12 plays an important role in translational accuracy. Functionally, located at the back of the 30S subunit body where it stabilizes the conformation of the head with respect to the body. This chain is Small ribosomal subunit protein uS5, found in Novosphingobium aromaticivorans (strain ATCC 700278 / DSM 12444 / CCUG 56034 / CIP 105152 / NBRC 16084 / F199).